Consider the following 195-residue polypeptide: ATP-dependent Clp protease proteolytic subunit (195 aa).

Residue Ser98 is the Nucleophile of the active site. The active site involves His123.

The protein belongs to the peptidase S14 family. Fourteen ClpP subunits assemble into 2 heptameric rings which stack back to back to give a disk-like structure with a central cavity, resembling the structure of eukaryotic proteasomes.

Its subcellular location is the cytoplasm. The enzyme catalyses Hydrolysis of proteins to small peptides in the presence of ATP and magnesium. alpha-casein is the usual test substrate. In the absence of ATP, only oligopeptides shorter than five residues are hydrolyzed (such as succinyl-Leu-Tyr-|-NHMec, and Leu-Tyr-Leu-|-Tyr-Trp, in which cleavage of the -Tyr-|-Leu- and -Tyr-|-Trp bonds also occurs).. Its function is as follows. Cleaves peptides in various proteins in a process that requires ATP hydrolysis. Has a chymotrypsin-like activity. Plays a major role in the degradation of misfolded proteins. This chain is ATP-dependent Clp protease proteolytic subunit, found in Helicobacter pylori (strain G27).